A 286-amino-acid chain; its full sequence is Shikimate dehydrogenase (NADP(+)) (286 aa).

Shikimate-binding positions include 22-24 (SFS) and T69. Residue K73 is the Proton acceptor of the active site. E85 provides a ligand contact to NADP(+). Residues N94 and D109 each coordinate shikimate. Residues 133-137 (GAGGA), 157-162 (NRTIDK), and L231 contribute to the NADP(+) site. Residue Y233 participates in shikimate binding. G254 contacts NADP(+).

The protein belongs to the shikimate dehydrogenase family. As to quaternary structure, homodimer.

The enzyme catalyses shikimate + NADP(+) = 3-dehydroshikimate + NADPH + H(+). The protein operates within metabolic intermediate biosynthesis; chorismate biosynthesis; chorismate from D-erythrose 4-phosphate and phosphoenolpyruvate: step 4/7. Functionally, involved in the biosynthesis of the chorismate, which leads to the biosynthesis of aromatic amino acids. Catalyzes the reversible NADPH linked reduction of 3-dehydroshikimate (DHSA) to yield shikimate (SA). The chain is Shikimate dehydrogenase (NADP(+)) from Alkaliphilus oremlandii (strain OhILAs) (Clostridium oremlandii (strain OhILAs)).